A 719-amino-acid polypeptide reads, in one-letter code: Protein ENHANCED DISEASE RESISTANCE 2-like (719 aa).

Positions 3–110 (KVVYEGWMVR…WKEKIECVID (108 aa)) constitute a PH domain. The interval 134-173 (AGRTASSSDHESPFSALEDENDSQRDLLRRTTIGNGPPES) is disordered. The START domain maps to 180-392 (EFDAELSNQS…VSGLREWFSQ (213 aa)). Residues 414–478 (ALGKGGKHHH…ETDAKKTEEP (65 aa)) are disordered. Residues 426-439 (SLSIDQTNGASRNS) are compositionally biased toward polar residues. The segment covering 442–461 (MDEDSDDDDEFQIPDSEPEP) has biased composition (acidic residues). A compositionally biased stretch (basic and acidic residues) spans 462–477 (ETSKQDQETDAKKTEE). The chain crosses the membrane as a helical span at residues 665–685 (GVLGLVIGVITSLVVEMAFLV).

It is found in the endoplasmic reticulum membrane. Its subcellular location is the cell membrane. It localises to the endosome membrane. Its function is as follows. Binds to phosphatidylinositol-4-phosphate (PtdIns(4)P). May regulate the salicylic acid- (SA-) mediated resistance to pathogens. The protein is Protein ENHANCED DISEASE RESISTANCE 2-like (EDR2L) of Arabidopsis thaliana (Mouse-ear cress).